We begin with the raw amino-acid sequence, 456 residues long: Phosphomethylpyrimidine synthase (456 aa).

Residues Asn80, Met109, Tyr139, His175, 195-197 (SRG), 236-239 (DSLR), and Glu275 contribute to the substrate site. Position 279 (His279) interacts with Zn(2+). Tyr302 is a substrate binding site. Residue His343 participates in Zn(2+) binding. [4Fe-4S] cluster-binding residues include Cys423, Cys426, and Cys431.

Belongs to the ThiC family. Requires [4Fe-4S] cluster as cofactor.

It carries out the reaction 5-amino-1-(5-phospho-beta-D-ribosyl)imidazole + S-adenosyl-L-methionine = 4-amino-2-methyl-5-(phosphooxymethyl)pyrimidine + CO + 5'-deoxyadenosine + formate + L-methionine + 3 H(+). It participates in cofactor biosynthesis; thiamine diphosphate biosynthesis. In terms of biological role, catalyzes the synthesis of the hydroxymethylpyrimidine phosphate (HMP-P) moiety of thiamine from aminoimidazole ribotide (AIR) in a radical S-adenosyl-L-methionine (SAM)-dependent reaction. This Prochlorococcus marinus (strain MIT 9312) protein is Phosphomethylpyrimidine synthase.